The sequence spans 366 residues: Methyltransferase phm5 (366 aa).

S-adenosyl-L-methionine is bound by residues 204–205, D230, 255–256, R273, and R274; these read GG and SM.

Belongs to the class I-like SAM-binding methyltransferase superfamily. Cation-independent O-methyltransferase family.

It participates in secondary metabolite biosynthesis. Its function is as follows. Methyltransferase; part of the gene cluster that mediates the biosynthesis of the trans-fused decalin-containing tetramic acid phomasetin, the stereochemical opposite of the HIV-1 integrase inhibitor equisetin. The PKS module of phm1 together with the enoylreductase phm4 catalyze the formation of the polyketide unit which is then conjugated to L-serine by the condensation domain of the phm1 NRPS module. Activity of the Dieckmann cyclase domain (RED) of phm1 results in release of the Dieckmann product intermediate. The Diels-Alderase phm7 then uses the Dieckmann product of phm1 as substrate and catalyzes the Diels-Alder cycloaddition to form the decalin ring of N-desmethylphomasetin. N-desmethylphomasetin is further methylated to phomasetin by the methyltransferase phm5. The chain is Methyltransferase phm5 from Pyrenochaetopsis sp.